Here is a 122-residue protein sequence, read N- to C-terminus: Large ribosomal subunit protein uL14 (122 aa).

It belongs to the universal ribosomal protein uL14 family. Part of the 50S ribosomal subunit. Forms a cluster with proteins L3 and L19. In the 70S ribosome, L14 and L19 interact and together make contacts with the 16S rRNA in bridges B5 and B8.

Its function is as follows. Binds to 23S rRNA. Forms part of two intersubunit bridges in the 70S ribosome. The sequence is that of Large ribosomal subunit protein uL14 from Mycobacterium tuberculosis (strain ATCC 25177 / H37Ra).